The primary structure comprises 117 residues: Nascent polypeptide-associated complex protein (117 aa).

Residues 3-72 (PVNPRDLEKM…YTVEKPREET (70 aa)) enclose the NAC-A/B domain.

It belongs to the NAC-alpha family. In terms of assembly, homodimer. Interacts with the ribosome. Binds ribosomal RNA.

Its function is as follows. Contacts the emerging nascent chain on the ribosome. The protein is Nascent polypeptide-associated complex protein of Aeropyrum pernix (strain ATCC 700893 / DSM 11879 / JCM 9820 / NBRC 100138 / K1).